The chain runs to 288 residues: Glucose uptake protein GlcU (288 aa).

10 consecutive transmembrane segments (helical) span residues 4-26 (LIAL…VGGG), 33-51 (GTTF…TGNA), 56-75 (LTII…GQGY), 82-104 (LIGV…TLFS), 114-136 (GVQV…LTSI), 148-170 (NFGK…VVVA), 180-197 (ALFF…ILSA), 206-225 (TLWN…FMFY), 230-252 (VGVA…GGIF), and 264-283 (IGIW…SEIL).

Belongs to the GRP transporter (TC 2.A.7.5) family.

Its subcellular location is the cell membrane. Its function is as follows. Involved in the uptake of glucose. The protein is Glucose uptake protein GlcU (glcU) of Staphylococcus xylosus.